The chain runs to 179 residues: Large ribosomal subunit protein uL5 (179 aa).

This sequence belongs to the universal ribosomal protein uL5 family. Part of the 50S ribosomal subunit; part of the 5S rRNA/L5/L18/L25 subcomplex. Contacts the 5S rRNA and the P site tRNA. Forms a bridge to the 30S subunit in the 70S ribosome.

Its function is as follows. This is one of the proteins that bind and probably mediate the attachment of the 5S RNA into the large ribosomal subunit, where it forms part of the central protuberance. In the 70S ribosome it contacts protein S13 of the 30S subunit (bridge B1b), connecting the 2 subunits; this bridge is implicated in subunit movement. Contacts the P site tRNA; the 5S rRNA and some of its associated proteins might help stabilize positioning of ribosome-bound tRNAs. The sequence is that of Large ribosomal subunit protein uL5 from Citrifermentans bemidjiense (strain ATCC BAA-1014 / DSM 16622 / JCM 12645 / Bem) (Geobacter bemidjiensis).